The following is a 425-amino-acid chain: GTPase Obg (425 aa).

The region spanning methionine 1 to isoleucine 158 is the Obg domain. The disordered stretch occupies residues lysine 118–glutamate 144. An OBG-type G domain is found at alanine 159 to alanine 327. Residues glycine 165–serine 172, phenylalanine 190–threonine 194, aspartate 211–glycine 214, asparagine 281–glutamate 284, and serine 308–alanine 310 contribute to the ATP site. Mg(2+) contacts are provided by serine 172 and threonine 192. One can recognise an OCT domain in the interval arginine 348–glutamate 425.

Belongs to the TRAFAC class OBG-HflX-like GTPase superfamily. OBG GTPase family. Monomer. It depends on Mg(2+) as a cofactor.

It is found in the cytoplasm. An essential GTPase which binds GTP, GDP and possibly (p)ppGpp with moderate affinity, with high nucleotide exchange rates and a fairly low GTP hydrolysis rate. Plays a role in control of the cell cycle, stress response, ribosome biogenesis and in those bacteria that undergo differentiation, in morphogenesis control. This Brevibacillus brevis (strain 47 / JCM 6285 / NBRC 100599) protein is GTPase Obg.